The chain runs to 311 residues: Malate dehydrogenase (311 aa).

NAD(+) is bound by residues 7–13 and aspartate 34; that span reads GAAGGIG. Positions 81 and 87 each coordinate substrate. NAD(+) contacts are provided by residues asparagine 94 and 117–119; that span reads ITN. Residues asparagine 119 and arginine 153 each coordinate substrate. Histidine 177 (proton acceptor) is an active-site residue. Methionine 227 is a binding site for NAD(+).

It belongs to the LDH/MDH superfamily. MDH type 1 family. Homodimer.

It catalyses the reaction (S)-malate + NAD(+) = oxaloacetate + NADH + H(+). In terms of biological role, catalyzes the reversible oxidation of malate to oxaloacetate. The polypeptide is Malate dehydrogenase (Shewanella halifaxensis (strain HAW-EB4)).